A 315-amino-acid polypeptide reads, in one-letter code: Acetyl-coenzyme A carboxylase carboxyl transferase subunit alpha (315 aa).

In terms of domain architecture, CoA carboxyltransferase C-terminal spans 40 to 293; that stretch reads LQDKSKTLTE…REELSSQLAM (254 aa).

This sequence belongs to the AccA family. In terms of assembly, acetyl-CoA carboxylase is a heterohexamer composed of biotin carboxyl carrier protein (AccB), biotin carboxylase (AccC) and two subunits each of ACCase subunit alpha (AccA) and ACCase subunit beta (AccD).

It is found in the cytoplasm. The catalysed reaction is N(6)-carboxybiotinyl-L-lysyl-[protein] + acetyl-CoA = N(6)-biotinyl-L-lysyl-[protein] + malonyl-CoA. Its pathway is lipid metabolism; malonyl-CoA biosynthesis; malonyl-CoA from acetyl-CoA: step 1/1. Its function is as follows. Component of the acetyl coenzyme A carboxylase (ACC) complex. First, biotin carboxylase catalyzes the carboxylation of biotin on its carrier protein (BCCP) and then the CO(2) group is transferred by the carboxyltransferase to acetyl-CoA to form malonyl-CoA. This Pseudomonas syringae pv. tomato (strain ATCC BAA-871 / DC3000) protein is Acetyl-coenzyme A carboxylase carboxyl transferase subunit alpha.